Reading from the N-terminus, the 387-residue chain is MDKHKDRIESMRLILQVMQLFGLWPWSLKSEEEWTFTGFVKRNYRFLLHLPITFTFIGLMWLEAFISSNLEQAGQVLYMSITEMALVVKILSIWHYRTEAWRLMYELQHAPDYQLHNQEEVDFWRREQRFFKWFFYIYILISLGVVYSGCTGVLFLEGYELPFAYYVPFEWQNERRYWFAYGYDMAGMTLTCISNITLDTLGCYFLFHISLLYRLLGLRLRETKNMKNDTIFGQQLRAIFIMHQRIRSLTLTCQRIVSPYILSQIILSALIICFSGYRLQHVGIRDNPGQFISMLQFVSVMILQIYLPCYYGNEITVYANQLTNEVYHTNWLECRPPIRKLLNAYMEHLKKPVTIRAGNFFAVGLPIFVKTINNAYSFLALLLNVSN.

The Cytoplasmic portion of the chain corresponds to methionine 1 to arginine 45. A helical transmembrane segment spans residues phenylalanine 46–isoleucine 66. Over serine 67–glutamine 75 the chain is Extracellular. The helical transmembrane segment at valine 76–tyrosine 96 threads the bilayer. The Cytoplasmic segment spans residues arginine 97–tryptophan 133. The chain crosses the membrane as a helical span at residues phenylalanine 134 to leucine 154. Residues phenylalanine 155–threonine 191 lie on the Extracellular side of the membrane. The helical transmembrane segment at cysteine 192–leucine 212 threads the bilayer. Topologically, residues tyrosine 213 to arginine 255 are cytoplasmic. Residues isoleucine 256–glycine 276 traverse the membrane as a helical segment. Residues tyrosine 277 to glutamine 290 are Extracellular-facing. Residues phenylalanine 291 to tyrosine 311 traverse the membrane as a helical segment. Topologically, residues glycine 312–alanine 362 are cytoplasmic. A helical membrane pass occupies residues valine 363 to leucine 383. Asparagine 384 is a glycosylation site (N-linked (GlcNAc...) asparagine). The Extracellular segment spans residues asparagine 384–asparagine 387.

Belongs to the insect chemoreceptor superfamily. Heteromeric odorant receptor channel (TC 1.A.69) family. Or2a subfamily. Interacts with Orco. Complexes exist early in the endomembrane system in olfactory sensory neurons (OSNs), coupling these complexes to the conserved ciliary trafficking pathway.

The protein resides in the cell membrane. Functionally, odorant receptor which mediates acceptance or avoidance behavior, depending on its substrates. The odorant receptor repertoire encodes a large collection of odor stimuli that vary widely in identity, intensity, and duration. May form a complex with Orco to form odorant-sensing units, providing sensitive and prolonged odorant signaling and calcium permeability. This Drosophila melanogaster (Fruit fly) protein is Odorant receptor 94a (Or94a).